Consider the following 285-residue polypeptide: 4-hydroxybenzoate octaprenyltransferase (285 aa).

7 helical membrane passes run 20–39, 92–112, 137–157, 159–179, 206–226, 228–248, and 260–280; these read GSYLLLWPTLWALMIAAQGL, ALGLFATLVGVAFLLVLALNW, FPQVVLGAAFGWAIPMAFMAV, EAVPAIAWWLFAINVLWTVAY, YDRLIIGLLQLSVVVMLLGMG, YLGFTLSFYVGVLLASVLFIH, and ACFSAFLNNNYVGMAIALGIA.

Belongs to the UbiA prenyltransferase family. It depends on Mg(2+) as a cofactor.

The protein localises to the cell inner membrane. It catalyses the reaction all-trans-octaprenyl diphosphate + 4-hydroxybenzoate = 4-hydroxy-3-(all-trans-octaprenyl)benzoate + diphosphate. It functions in the pathway cofactor biosynthesis; ubiquinone biosynthesis. Its function is as follows. Catalyzes the prenylation of para-hydroxybenzoate (PHB) with an all-trans polyprenyl group. Mediates the second step in the final reaction sequence of ubiquinone-8 (UQ-8) biosynthesis, which is the condensation of the polyisoprenoid side chain with PHB, generating the first membrane-bound Q intermediate 3-octaprenyl-4-hydroxybenzoate. The sequence is that of 4-hydroxybenzoate octaprenyltransferase from Pseudoalteromonas atlantica (strain T6c / ATCC BAA-1087).